Reading from the N-terminus, the 269-residue chain is AQSVPWGISRVQAPAAHNRGLTGSGVKVAVLDTGISTHPDLNIRGGASFVPGEPSTQDGNGHGTHVAGTIAALNNSIGVLGVAPSAELYAVKVLGADGRGAISSIAQGLEWAGNNGMHVANLSLGSPSPSATLEQAVNSATSRGVLVVAASGNSGASSISYPARYANAMAVGATDQNNNRASFSQYGAGLDIVAPGVNVQSTYPGSTYASLNGTSMATPHVAGAAALVKQKNPSWSNVQIRNHLKNTATSLGSTNLYGSGLVNAEAATR.

Gln2 lines the Ca(2+) pocket. The region spanning Pro5–Thr268 is the Peptidase S8 domain. The active-site Charge relay system is the Asp32. Asp40 contributes to the Ca(2+) binding site. His62 acts as the Charge relay system in catalysis. Positions 73, 75, 77, 79, 163, 165, and 168 each coordinate Ca(2+). The active-site Charge relay system is the Ser215.

This sequence belongs to the peptidase S8 family. Ca(2+) serves as cofactor.

Its subcellular location is the secreted. It carries out the reaction Hydrolysis of proteins with broad specificity for peptide bonds, and a preference for a large uncharged residue in P1. Hydrolyzes peptide amides.. In terms of biological role, subtilisin is an extracellular alkaline serine protease, it catalyzes the hydrolysis of proteins and peptide amides. The polypeptide is Subtilisin BL (Lederbergia lenta (Bacillus lentus)).